A 103-amino-acid polypeptide reads, in one-letter code: MENIEKKEIRPLYIRERVAVYVYCYSYKGTRQLSRFGDIVYSSQKSHYSLLYVNNDEVADLLNKLKELRFVKKVRVGHIKELDQNFSEAFIQTNLEVKEELEH.

Belongs to the UPF0298 family.

Its subcellular location is the cytoplasm. This chain is UPF0298 protein LACR_0404, found in Lactococcus lactis subsp. cremoris (strain SK11).